Consider the following 423-residue polypeptide: Serine--tRNA ligase (423 aa).

229 to 231 (TAE) serves as a coordination point for L-serine. Residue 260–262 (RKE) participates in ATP binding. E283 serves as a coordination point for L-serine. Residue 347 to 350 (EVSS) participates in ATP binding. S383 contacts L-serine.

The protein belongs to the class-II aminoacyl-tRNA synthetase family. Type-1 seryl-tRNA synthetase subfamily. Homodimer. The tRNA molecule binds across the dimer.

The protein resides in the cytoplasm. It carries out the reaction tRNA(Ser) + L-serine + ATP = L-seryl-tRNA(Ser) + AMP + diphosphate + H(+). The catalysed reaction is tRNA(Sec) + L-serine + ATP = L-seryl-tRNA(Sec) + AMP + diphosphate + H(+). Its pathway is aminoacyl-tRNA biosynthesis; selenocysteinyl-tRNA(Sec) biosynthesis; L-seryl-tRNA(Sec) from L-serine and tRNA(Sec): step 1/1. Functionally, catalyzes the attachment of serine to tRNA(Ser). Is also able to aminoacylate tRNA(Sec) with serine, to form the misacylated tRNA L-seryl-tRNA(Sec), which will be further converted into selenocysteinyl-tRNA(Sec). The sequence is that of Serine--tRNA ligase from Chloroflexus aurantiacus (strain ATCC 29366 / DSM 635 / J-10-fl).